We begin with the raw amino-acid sequence, 476 residues long: Protein transport protein Sec61 subunit alpha (476 aa).

Residues 2 to 33 (GIKFLEVIKPFCAVLPEIQKPERKIQFREKVL) are Cytoplasmic-facing. A helical transmembrane segment spans residues 34-53 (WTAITLFIFLVCCQIPLFGI). Residues 54–76 (MSSDSADPFYWMRVILASNRGTL) lie on the Lumenal side of the membrane. Residues 77–96 (MELGISPIVTSGLIMQLLAG) form a helical membrane-spanning segment. The Cytoplasmic segment spans residues 97–117 (AKIIGVGDTPKDRALFNGAQK). Residues 118-138 (LFGMIITIGQAIVYVMTGMYG) traverse the membrane as a helical segment. At 139-144 (DPSEMG) the chain is on the lumenal side. The helical transmembrane segment at 145–165 (AGICLLIIIQLFVAGLIVLLL) threads the bilayer. Residues 166–172 (DELLQKG) lie on the Cytoplasmic side of the membrane. Residues 173-193 (YGLGSGISLFIATNICETIVW) form a helical membrane-spanning segment. Topologically, residues 194-240 (KAFSPTTVNTGRGTEFEGAIIALFHLLATRTDKVRALREGFYRQNLP) are lumenal. A helical membrane pass occupies residues 241 to 261 (NLMNLIATVFVFAVVIYFQGF). Topologically, residues 262-288 (RVDLPIKSARYRGQYNTYPIKLFYTSN) are cytoplasmic. Residues 289–309 (IPIILQSALVSNLYVISQMLS) form a helical membrane-spanning segment. Residues 310–354 (TRFSGNFLVNLLGTWSDATSGGPARAYPVAGLCYYLSPPESFGSV) are Lumenal-facing. The chain crosses the membrane as a helical span at residues 355-375 (LDDPVHAGIYIVFMLGSCAFF). Topologically, residues 376–420 (SKTWIEVSGSSAKDVAKQLKEQQMVMRGHRETSMVHELNRYIPTA) are cytoplasmic. Residues 421–441 (AAFGGLCIGGLSVMADFLGAI) form a helical membrane-spanning segment. Over 442 to 445 (GSGT) the chain is Lumenal. A helical transmembrane segment spans residues 446-462 (GILLAVTIIYQYFEIFV). At 463–476 (KEQSEVGSMGALLF) the chain is on the cytoplasmic side.

The protein belongs to the SecY/SEC61-alpha family. The SEC61 channel-forming translocon complex consists of channel-forming core components SEC61A1, SEC61B and SEC61G and different auxiliary components such as SEC62 and SEC63. The SEC61 channel associates with the multi-pass translocon (MPT) complex.

Its subcellular location is the endoplasmic reticulum membrane. Component of SEC61 channel-forming translocon complex that mediates transport of signal peptide-containing precursor polypeptides across the endoplasmic reticulum (ER). Forms a ribosome receptor and a gated pore in the ER membrane, both functions required for cotranslational translocation of nascent polypeptides. May cooperate with auxiliary protein SEC62, SEC63 and HSPA5/BiP to enable post-translational transport of small presecretory proteins. The SEC61 channel is also involved in ER membrane insertion of transmembrane proteins: it mediates membrane insertion of the first few transmembrane segments of proteins, while insertion of subsequent transmembrane regions of multi-pass membrane proteins is mediated by the multi-pass translocon (MPT) complex. This Hemitripterus americanus (Sea raven) protein is Protein transport protein Sec61 subunit alpha (sec61a).